The primary structure comprises 362 residues: RING finger protein 32 (362 aa).

An RING-type 1; atypical zinc finger spans residues 127-169 (CPICKEEFELRPQVLLSCSHVFHRACLQAFEKFTNKKTCPLCR). The IQ domain occupies 186-215 (RIKCVTRIQAYWRGYVVRKWYRNLRETVPP). The segment at 293–352 (CSICLAPLSPAGGQRVGAGQRSRETALLSCSHVFHHACLLALEEFSVGDRPPFHACPLCR) adopts an RING-type 2; atypical zinc-finger fold.

It is found in the cytoplasm. May play a role in sperm formation. The protein is RING finger protein 32 (RNF32) of Macaca fascicularis (Crab-eating macaque).